The chain runs to 351 residues: Ribosomal RNA large subunit methyltransferase N (351 aa).

Glu92 acts as the Proton acceptor in catalysis. The region spanning Gly105–Glu337 is the Radical SAM core domain. Cys112 and Cys342 form a disulfide bridge. Residues Cys119, Cys123, and Cys126 each contribute to the [4Fe-4S] cluster site. S-adenosyl-L-methionine-binding positions include Gly169–Glu170, Ser201, Ser224–His226, and Asn300. The S-methylcysteine intermediate role is filled by Cys342.

Belongs to the radical SAM superfamily. RlmN family. The cofactor is [4Fe-4S] cluster.

Its subcellular location is the cytoplasm. It catalyses the reaction adenosine(2503) in 23S rRNA + 2 reduced [2Fe-2S]-[ferredoxin] + 2 S-adenosyl-L-methionine = 2-methyladenosine(2503) in 23S rRNA + 5'-deoxyadenosine + L-methionine + 2 oxidized [2Fe-2S]-[ferredoxin] + S-adenosyl-L-homocysteine. Its function is as follows. Specifically methylates position 2 of adenine 2503 in 23S rRNA. The protein is Ribosomal RNA large subunit methyltransferase N of Nitrosopumilus maritimus (strain SCM1).